The primary structure comprises 183 residues: Peptidyl-tRNA hydrolase (183 aa).

Y15 provides a ligand contact to tRNA. H20 serves as the catalytic Proton acceptor. Y67 and N69 together coordinate tRNA.

The protein belongs to the PTH family. Monomer.

The protein localises to the cytoplasm. The catalysed reaction is an N-acyl-L-alpha-aminoacyl-tRNA + H2O = an N-acyl-L-amino acid + a tRNA + H(+). Hydrolyzes ribosome-free peptidyl-tRNAs (with 1 or more amino acids incorporated), which drop off the ribosome during protein synthesis, or as a result of ribosome stalling. Functionally, catalyzes the release of premature peptidyl moieties from peptidyl-tRNA molecules trapped in stalled 50S ribosomal subunits, and thus maintains levels of free tRNAs and 50S ribosomes. This is Peptidyl-tRNA hydrolase from Chlamydia caviae (strain ATCC VR-813 / DSM 19441 / 03DC25 / GPIC) (Chlamydophila caviae).